The primary structure comprises 587 residues: Serine/threonine-protein phosphatase 2A 65 kDa regulatory subunit A gamma isoform (587 aa).

Ser-2 bears the N-acetylserine mark. 14 HEAT repeats span residues 2 to 42 (SMVD…ALGE), 44 to 80 (RTRK…YVGG), 81 to 119 (VEYA…QMRE), 158 to 194 (DVLK…AATI), 197 to 235 (AHLK…LLEP), 236 to 274 (QDCV…AVGP), 276 to 313 (PTRT…ILNP), 314 to 352 (ELAI…VLGK), 353 to 391 (DATI…VIGI), 393 to 430 (LLSQ…QLGV), 432 to 469 (FFDE…EFGP), 470 to 508 (EWAM…VMGS), 509 to 547 (EITC…IVDQ), and 549 to 586 (VVEN…VMMS).

This sequence belongs to the phosphatase 2A regulatory subunit A family. As to quaternary structure, PP2A consists of a common heterodimeric core enzyme, composed of a 36 kDa catalytic subunit (subunit C) and a 65 kDa constant regulatory subunit (subunit A), that associates with a variety of regulatory subunits such as subunits B (the R2/B/PR55/B55, R3/B''/PR72/PR130/PR59 and R5/B'/B56 families). Interacts with CHIP. Interacts with SRK2E/OST1. In terms of processing, ubiquitinated. CHIP-mediated ubiquitination enhances phosphatase activity after an abiotic stress such as low temperature or darkness. As to expression, expressed ubiquitously at stable levels. However, higher protein levels in roots and flowers (at protein level).

Its subcellular location is the cytoplasm. It localises to the cytosol. The protein localises to the nucleus. In terms of biological role, the A subunit of protein phosphatase 2A serves as a scaffolding molecule to coordinate the assembly of the catalytic subunit and a variable regulatory B subunit. Involved during developmental process such as seedling and floral developments. Seems to act as a negative regulator of PP2A catalytic activity. The chain is Serine/threonine-protein phosphatase 2A 65 kDa regulatory subunit A gamma isoform (PP2AA3) from Arabidopsis thaliana (Mouse-ear cress).